Consider the following 670-residue polypeptide: Carnitine O-acetyltransferase, mitochondrial (670 aa).

His-378 serves as the catalytic Proton acceptor. CoA contacts are provided by residues Lys-461 and Lys-465–Asp-472. Tyr-494 lines the (R)-carnitine pocket. Ser-498 contributes to the CoA binding site. Thr-507 is a (R)-carnitine binding site. Gln-597 contributes to the CoA binding site. A Microbody targeting signal motif is present at residues Ala-668 to Leu-670.

This sequence belongs to the carnitine/choline acetyltransferase family.

The protein resides in the mitochondrion inner membrane. Its subcellular location is the peroxisome. The enzyme catalyses (R)-carnitine + acetyl-CoA = O-acetyl-(R)-carnitine + CoA. Carnitine acetylase is specific for short chain fatty acids. Carnitine acetylase seems to affect the flux through the pyruvate dehydrogenase complex. It may be involved as well in the transport of acetyl-CoA into mitochondria. This chain is Carnitine O-acetyltransferase, mitochondrial (CAT2), found in Saccharomyces cerevisiae (strain ATCC 204508 / S288c) (Baker's yeast).